The primary structure comprises 1165 residues: Pesticidal crystal protein Cry1Da (1165 aa).

It belongs to the delta endotoxin family.

Its function is as follows. Promotes colloidosmotic lysis by binding to the midgut epithelial cells of many lepidopteran larvae. The protein is Pesticidal crystal protein Cry1Da (cry1Da) of Bacillus thuringiensis subsp. aizawai.